Here is a 357-residue protein sequence, read N- to C-terminus: tRNA-specific 2-thiouridylase MnmA (357 aa).

Residues 7–14 (GLSGGVDS) and Met-33 contribute to the ATP site. Residues 94–96 (NPD) form an interaction with target base in tRNA region. Cys-99 acts as the Nucleophile in catalysis. An intrachain disulfide couples Cys-99 to Cys-195. Residue Gly-123 coordinates ATP. Positions 145–147 (KDQ) are interaction with tRNA. Residue Cys-195 is the Cysteine persulfide intermediate of the active site. The tract at residues 303–304 (RY) is interaction with tRNA.

Belongs to the MnmA/TRMU family.

The protein resides in the cytoplasm. It catalyses the reaction S-sulfanyl-L-cysteinyl-[protein] + uridine(34) in tRNA + AH2 + ATP = 2-thiouridine(34) in tRNA + L-cysteinyl-[protein] + A + AMP + diphosphate + H(+). In terms of biological role, catalyzes the 2-thiolation of uridine at the wobble position (U34) of tRNA, leading to the formation of s(2)U34. This chain is tRNA-specific 2-thiouridylase MnmA, found in Akkermansia muciniphila (strain ATCC BAA-835 / DSM 22959 / JCM 33894 / BCRC 81048 / CCUG 64013 / CIP 107961 / Muc).